Consider the following 188-residue polypeptide: GTP cyclohydrolase 1 (188 aa).

Zn(2+) contacts are provided by C76, H79, and C148.

Belongs to the GTP cyclohydrolase I family. Toroid-shaped homodecamer, composed of two pentamers of five dimers.

The enzyme catalyses GTP + H2O = 7,8-dihydroneopterin 3'-triphosphate + formate + H(+). Its pathway is cofactor biosynthesis; 7,8-dihydroneopterin triphosphate biosynthesis; 7,8-dihydroneopterin triphosphate from GTP: step 1/1. This Caldanaerobacter subterraneus subsp. tengcongensis (strain DSM 15242 / JCM 11007 / NBRC 100824 / MB4) (Thermoanaerobacter tengcongensis) protein is GTP cyclohydrolase 1.